We begin with the raw amino-acid sequence, 1466 residues long: MSHRHHAALVASASGRSPSWGSAISQSFRQVEAEDPFRRAQSMRGHDEEEEDLRWAALEKLPTYDRMRRGVVRSALLRDGDDDHKDDDDAGTGKAVELVDIGRLATGDAARALVERLLQDDSERFLRRLRDRIDMVGIELPKIEIRYEELSVQADAFVASRALPTLSNSAINFLQGLIGQFGSSNKKTINILKQVNGILKSSRMTLLLGPPSSGKSTLMRALTGKLDKNLKVFGNITYCGHKFSEFYPERTSAYVSQYDLHNAEMTVRETLDFSRWCLGIGSRYDMLTEISRRERNAGIKPDPEIDAFMKATAMQGQETNIITDLILKVLGLDICADTIVGDEMIRGISGGQMKRVTTGEMLTGPARALLMDEISTGLDSSSTFHIVKFIRHLVHIMNETVMISLLQPPPETYNLFDDIVLLSEGYIVYHGPRENILEFFEASGFRCPQRKAVADFLQEVTSKKDQQQYWFLDKEPYCYVSVPEFAERFKSFYIGQQMMKEQHIPFEKSKIHPAALTTMKNALSNWESLKAVLCREKLLMKRNSFLYIFKVTQLIILAFLSMTVFLRTKMPHGQFSDGTKFLGALTFNLITVMFNGLSELNLTVKKLPVFYKHRDFLFFPPWTFGVANILIKVPVSLVEATVWVVITYYVMGFAPAAGRFFRQFLAFFVTHLMAMALFRFLGAILQTMVIAISFGMLVLLIVFVFGGFVIRKNDIRPWWIWCYWASPMMYSQNAISINEFLASRWAIPNNDTTIDAKTVGEAILKSKGLFTGEWGFWLSIGALVGFIILFNTLYILALTYLSPIRSANALVIDEHNETELYTETRNEEHRSRTSTTTSSIPTSANGEGNRPTQSQFVLPFQPLSLCFNHLNYYVDMPSEMKQQGLMESRLQLLSDISGAFRPGLLTALVGVSGAGKTTLMDVLAGRKTSGTIEGSITLSGYSKKQETFARISGYCEQADIHSPNVTVYESILYSAWLRLPSDVDSNTRKMFVEEVMALVELDVLCNAMVGLPGVSGLSTEQRKRLTIAVELVANPSIIFMDEPTSGLDARAAAIVMRTVRNTVNTGRTVVCTIHQPSIDIFESFDELLLLKRGGRVIYAGELGDHSHKLVEYFETILGVPSITEGYNPATWMLEVSSTLEEARMNVDFAEIYANSLLYRKNQELIEELSIPPPGYRDLLFATKYSQSFYIQCVANLWKQYKSYWKNPSYNSLRYLTTFLYGLFFGTVFWQKGTKLDSQQDLYNLLGATYAAIFFIGATNCMSVQPVVSIERAVYYRESAAGMYSPLSYAFAQASVEFIYNIIQGILYTVIIYAMIGYDWKASKFFYFLFFIVSSFNYFTFFGMMLVACTPSALLANILITFALPLWNLFAGFLIFRKAIPIWWRWYYWANPVSWTIYGVIASQFGGNGGSISVPGGSHVAMSQILEDNVGVRHDFLGYVILAHFGFMAAFVLIFGYSIKFLNFQKR.

A disordered region spans residues 1-21; sequence MSHRHHAALVASASGRSPSWG. One can recognise an ABC transporter 1 domain in the interval 176–449; the sequence is GLIGQFGSSN…FEASGFRCPQ (274 aa). 209 to 216 is an ATP binding site; it reads GPPSSGKS. Residues 527–740 enclose the ABC transmembrane type-2 1 domain; it reads ESLKAVLCRE…SQNAISINEF (214 aa). 6 helical membrane-spanning segments follow: residues 545 to 565, 581 to 601, 633 to 653, 664 to 684, 690 to 710, and 776 to 796; these read FLYI…MTVF, FLGA…SELN, VPVS…VMGF, FLAF…LGAI, IAIS…GFVI, and FWLS…LYIL. The segment covering 821-831 has biased composition (basic and acidic residues); it reads YTETRNEEHRS. The interval 821 to 851 is disordered; that stretch reads YTETRNEEHRSRTSTTTSSIPTSANGEGNRP. Low complexity predominate over residues 833-843; the sequence is TSTTTSSIPTS. Residues 865-1117 form the ABC transporter 2 domain; it reads LCFNHLNYYV…KLVEYFETIL (253 aa). 910–917 contacts ATP; that stretch reads GVSGAGKT. Residues 1190 to 1404 enclose the ABC transmembrane type-2 2 domain; it reads IQCVANLWKQ…TIYGVIASQF (215 aa). 7 consecutive transmembrane segments (helical) span residues 1209 to 1229, 1241 to 1261, 1297 to 1317, 1327 to 1347, 1355 to 1375, 1396 to 1416, and 1435 to 1455; these read YNSL…TVFW, LYNL…TNCM, FIYN…MIGY, FLFF…MLVA, ANIL…FLIF, IYGV…VPGG, and FLGY…LIFG.

The protein belongs to the ABC transporter superfamily. ABCG family. PDR (TC 3.A.1.205) subfamily.

It is found in the membrane. The polypeptide is ABC transporter G family member 40 (Oryza sativa subsp. japonica (Rice)).